Consider the following 174-residue polypeptide: Adipose-secreted signaling protein (174 aa).

This sequence belongs to the ADISSP family.

It localises to the secreted. In terms of biological role, may be involved in thermogenesis and glucose homeostasis. This chain is Adipose-secreted signaling protein, found in Xenopus tropicalis (Western clawed frog).